We begin with the raw amino-acid sequence, 325 residues long: uncharacterized protein (325 aa).

Residues 10–30 (IVFVSLAALVLLVSVSVFIYH) traverse the membrane as a helical segment. The region spanning 94-166 (KIAVVDRAGY…EIKAIIAMDI (73 aa)) is the AB hydrolase-1 domain.

The protein resides in the cell membrane. This is an uncharacterized protein from Bacillus subtilis (strain 168).